Reading from the N-terminus, the 170-residue chain is Lipoprotein signal peptidase (170 aa).

A run of 3 helical transmembrane segments spans residues 12–32 (WYWV…WVLS), 67–87 (WQRW…SVWL), and 94–113 (MWRL…GNLI). Active-site residues include aspartate 123 and aspartate 141. The chain crosses the membrane as a helical span at residues 139 to 159 (IADSAICVGAGLIILDSFVAG).

It belongs to the peptidase A8 family.

The protein localises to the cell inner membrane. It carries out the reaction Release of signal peptides from bacterial membrane prolipoproteins. Hydrolyzes -Xaa-Yaa-Zaa-|-(S,diacylglyceryl)Cys-, in which Xaa is hydrophobic (preferably Leu), and Yaa (Ala or Ser) and Zaa (Gly or Ala) have small, neutral side chains.. It participates in protein modification; lipoprotein biosynthesis (signal peptide cleavage). Its function is as follows. This protein specifically catalyzes the removal of signal peptides from prolipoproteins. This Shewanella pealeana (strain ATCC 700345 / ANG-SQ1) protein is Lipoprotein signal peptidase.